Reading from the N-terminus, the 616-residue chain is 1-deoxy-D-xylulose-5-phosphate synthase (616 aa).

Thiamine diphosphate-binding positions include His74 and 115 to 117 (GHS). Residue Asp146 participates in Mg(2+) binding. Residues 147–148 (GA), Asn175, Tyr282, and Glu365 contribute to the thiamine diphosphate site. Residue Asn175 participates in Mg(2+) binding.

It belongs to the transketolase family. DXPS subfamily. Homodimer. Requires Mg(2+) as cofactor. Thiamine diphosphate serves as cofactor.

It catalyses the reaction D-glyceraldehyde 3-phosphate + pyruvate + H(+) = 1-deoxy-D-xylulose 5-phosphate + CO2. It participates in metabolic intermediate biosynthesis; 1-deoxy-D-xylulose 5-phosphate biosynthesis; 1-deoxy-D-xylulose 5-phosphate from D-glyceraldehyde 3-phosphate and pyruvate: step 1/1. Its function is as follows. Catalyzes the acyloin condensation reaction between C atoms 2 and 3 of pyruvate and glyceraldehyde 3-phosphate to yield 1-deoxy-D-xylulose-5-phosphate (DXP). This chain is 1-deoxy-D-xylulose-5-phosphate synthase, found in Chromobacterium violaceum (strain ATCC 12472 / DSM 30191 / JCM 1249 / CCUG 213 / NBRC 12614 / NCIMB 9131 / NCTC 9757 / MK).